The following is a 609-amino-acid chain: Phosphoenolpyruvate carboxykinase [GTP] (609 aa).

Substrate contacts are provided by residues R81 and Y220–G222. Mn(2+)-binding residues include K229 and H249. A substrate-binding site is contributed by S271. A272–N277 serves as a coordination point for GTP. C273 is an active-site residue. A Mn(2+)-binding site is contributed by D296. N387–R389 serves as a coordination point for substrate. GTP-binding positions include R389, R420, and F515 to N518.

The protein belongs to the phosphoenolpyruvate carboxykinase [GTP] family. As to quaternary structure, monomer. The cofactor is Mn(2+).

Its subcellular location is the cytoplasm. The enzyme catalyses oxaloacetate + GTP = phosphoenolpyruvate + GDP + CO2. It participates in carbohydrate biosynthesis; gluconeogenesis. Its function is as follows. Catalyzes the conversion of oxaloacetate (OAA) to phosphoenolpyruvate (PEP), the rate-limiting step in the metabolic pathway that produces glucose from lactate and other precursors derived from the citric acid cycle. The polypeptide is Phosphoenolpyruvate carboxykinase [GTP] (Mycolicibacterium paratuberculosis (strain ATCC BAA-968 / K-10) (Mycobacterium paratuberculosis)).